A 309-amino-acid chain; its full sequence is 2-phosphoglycerate kinase (309 aa).

The ATP-cone domain occupies 5–92 (NDIIVRGKSY…LWRMVLGRRP (88 aa)).

This sequence belongs to the 2-phosphoglycerate kinase family. The cofactor is a divalent metal cation.

The catalysed reaction is (2R)-2-phosphoglycerate + ATP = (2R)-2,3-bisphosphoglycerate + ADP + H(+). It participates in thermoadapter biosynthesis; cyclic 2,3-diphosphoglycerate biosynthesis; cyclic 2,3-diphosphoglycerate from 2-phospho-D-glycerate: step 1/2. Its function is as follows. Catalyzes the phosphorylation of 2-phosphoglycerate to 2,3-diphosphoglycerate. Involved in the biosynthesis of cyclic 2,3-bisphosphoglycerate, a thermoprotectant. The protein is 2-phosphoglycerate kinase of Methanocaldococcus jannaschii (strain ATCC 43067 / DSM 2661 / JAL-1 / JCM 10045 / NBRC 100440) (Methanococcus jannaschii).